A 545-amino-acid polypeptide reads, in one-letter code: 4-coumarate--CoA ligase 1 (545 aa).

ATP contacts are provided by Ser-192, Ser-193, Gly-194, Thr-195, Thr-196, and Lys-200. 2 residues coordinate (E)-4-coumaroyl-AMP: Tyr-242 and Ser-246. A CoA-binding site is contributed by Lys-263. The segment at 265-334 (DIAQFLELIP…AKFPNAKLGQ (70 aa)) is SBD1. 5 residues coordinate (E)-4-coumaroyl-AMP: Ala-312, Gln-334, Gly-335, Thr-339, and Met-347. Gln-334, Gly-335, and Thr-339 together coordinate ATP. An SBD2 region spans residues 335–402 (GYGMTEAGPV…IRGDQIMKGY (68 aa)). Residues Asp-423 and Arg-438 each coordinate ATP. Positions 440 and 444 each coordinate (E)-4-coumaroyl-AMP. Residues Lys-446 and Gly-447 each contribute to the CoA site. Residue Lys-529 coordinates ATP.

This sequence belongs to the ATP-dependent AMP-binding enzyme family. Mg(2+) is required as a cofactor.

It catalyses the reaction (E)-4-coumarate + ATP + CoA = (E)-4-coumaroyl-CoA + AMP + diphosphate. The catalysed reaction is (E)-4-coumarate + ATP + H(+) = (E)-4-coumaroyl-AMP + diphosphate. It carries out the reaction (E)-4-coumaroyl-AMP + CoA = (E)-4-coumaroyl-CoA + AMP + H(+). The protein operates within phytoalexin biosynthesis; 3,4',5-trihydroxystilbene biosynthesis; 3,4',5-trihydroxystilbene from trans-4-coumarate: step 1/2. In terms of biological role, carboxylate--CoA ligase that may use 4-coumarate as substrate. Follows a two-step reaction mechanism, wherein the carboxylate substrate first undergoes adenylation by ATP, followed by a thioesterification in the presence of CoA to yield the final CoA thioester. The polypeptide is 4-coumarate--CoA ligase 1 (4CL1) (Solanum tuberosum (Potato)).